The primary structure comprises 290 residues: Hsp70 nucleotide exchange factor FES1 (290 aa).

The residue at position 12 (serine 12) is a Phosphoserine. ARM repeat units lie at residues glutamine 13–valine 57, leucine 76–glutamine 116, aspartate 120–arginine 161, lysine 164–serine 205, glutamate 211–serine 251, and glycine 253–leucine 290.

It belongs to the FES1 family. As to quaternary structure, interacts with the Hsp70 chaperones SSA1 and SSB1.

It is found in the cytoplasm. Its function is as follows. Involved in protein translation, propagation of [PSI+] prions, and polyamine tolerance. Functions as a nucleotide exchange factor (NEF), which accelerates the release of ADP, for the cytosolic Hsp70 chaperone SSA1 and the ribosome-associated Hsp70 chaperone SSB1. Required for fully efficient Hsp70-mediated folding of proteins. The sequence is that of Hsp70 nucleotide exchange factor FES1 (FES1) from Saccharomyces cerevisiae (strain ATCC 204508 / S288c) (Baker's yeast).